A 245-amino-acid polypeptide reads, in one-letter code: Carboxymethylenebutenolidase homolog (245 aa).

Ala-2 is modified (N-acetylalanine). N6-acetyllysine is present on Lys-36. Catalysis depends on residues Cys-132, Asp-179, and His-212. A Phosphoserine modification is found at Ser-223.

The protein belongs to the dienelactone hydrolase family. Widely expressed, with highest levels in liver, followed by kidney, small intestine and colon. Present in liver and intestine (at protein level).

It is found in the cytoplasm. It localises to the cytosol. With respect to regulation, strongly inhibited by p-chloromercuribenzoate (PCMB). Partially inhibited by bis-p-nitrophenylphosphate (BNPP). Not inhibited by DFP, PMSF, eserine or EDTA. Functionally, cysteine hydrolase. Can convert the prodrug olmesartan medoxomil into its pharmacologically active metabolite olmerstatan, an angiotensin receptor blocker, in liver and intestine. May also activate beta-lactam antibiotics faropenem medoxomil and lenampicillin. This is Carboxymethylenebutenolidase homolog (CMBL) from Homo sapiens (Human).